Reading from the N-terminus, the 199-residue chain is Superoxide dismutase [Cu-Zn] (199 aa).

A signal peptide spans 1–22 (MKLTKVALFSLGLFGFSSMALA). Cu cation-binding residues include H92, H94, and H117. The cysteines at positions 99 and 195 are disulfide-linked. Residues H117, H126, H135, and D138 each contribute to the Zn(2+) site. H173 serves as a coordination point for Cu cation.

It belongs to the Cu-Zn superoxide dismutase family. As to quaternary structure, homodimer. The cofactor is Cu cation. Zn(2+) serves as cofactor.

The protein resides in the periplasm. It carries out the reaction 2 superoxide + 2 H(+) = H2O2 + O2. Its function is as follows. Destroys radicals which are normally produced within the cells and which are toxic to biological systems. May play a role in the interactive biology of organisms with their hosts and so contribute to their capacity to cause disease. The protein is Superoxide dismutase [Cu-Zn] (sodC) of Haemophilus ducreyi (strain 35000HP / ATCC 700724).